Here is a 932-residue protein sequence, read N- to C-terminus: Alanine--tRNA ligase, mitochondrial (932 aa).

The interval 458-480 (SRLTWNTSSSSSDQTTQQTTQLP) is disordered. Positions 464–478 (TSSSSSDQTTQQTTQ) are enriched in low complexity. 4 residues coordinate Zn(2+): H610, H614, C713, and H717.

The protein belongs to the class-II aminoacyl-tRNA synthetase family. In terms of assembly, monomer. The cofactor is Zn(2+).

Its subcellular location is the mitochondrion. It catalyses the reaction tRNA(Ala) + L-alanine + ATP = L-alanyl-tRNA(Ala) + AMP + diphosphate. Catalyzes the attachment of alanine to tRNA(Ala) in a two-step reaction: alanine is first activated by ATP to form Ala-AMP and then transferred to the acceptor end of tRNA(Ala). Also edits incorrectly charged tRNA(Ala) via its editing domain. This is Alanine--tRNA ligase, mitochondrial (malaS) from Dictyostelium discoideum (Social amoeba).